Reading from the N-terminus, the 32-residue chain is Protamine-1 (32 aa).

A disordered region spans residues 1–32 (PRRRRASSGRPVRRRRRPKMSRRRRRGGRRRR).

Testis.

The protein resides in the nucleus. The protein localises to the chromosome. Protamines substitute for histones in the chromatin of sperm during the haploid phase of spermatogenesis. They compact sperm DNA into a highly condensed, stable and inactive complex. This is Protamine-1 from Esox lucius (Northern pike).